Reading from the N-terminus, the 328-residue chain is Interleukin-12 subunit beta (328 aa).

The N-terminal stretch at 1 to 22 is a signal peptide; the sequence is MCHQQLVISWFSLVFLASPLMA. The 78-residue stretch at 29–106 folds into the Ig-like C2-type domain; the sequence is DVYVVELDWY…LSHSLLLLHK (78 aa). A disulfide bond links C50 and C90. N-linked (GlcNAc...) asparagine glycosylation is found at N125, N135, N222, and N303. In terms of domain architecture, Fibronectin type-III spans 237 to 328; it reads PPKNLQLKPL…WSEWASVPCS (92 aa).

Belongs to the IL-12B family. In terms of assembly, heterodimer with IL12A; disulfide-linked. The heterodimer is known as interleukin IL-12. Heterodimer with IL23A; disulfide-linked. The heterodimer is known as interleukin IL-23. Also secreted as a monomer. Interacts with NBR1; this interaction promotes IL-12 secretion.

The protein localises to the secreted. Its function is as follows. Cytokine that can act as a growth factor for activated T and NK cells, enhance the lytic activity of NK/lymphokine-activated killer cells, and stimulate the production of IFN-gamma by resting PBMC. In terms of biological role, associates with IL23A to form the IL-23 interleukin, a heterodimeric cytokine which functions in innate and adaptive immunity. IL-23 may constitute with IL-17 an acute response to infection in peripheral tissues. IL-23 binds to a heterodimeric receptor complex composed of IL12RB1 and IL23R, activates the Jak-Stat signaling cascade, stimulates memory rather than naive T-cells and promotes production of pro-inflammatory cytokines. IL-23 induces autoimmune inflammation and thus may be responsible for autoimmune inflammatory diseases and may be important for tumorigenesis. This Papio anubis (Olive baboon) protein is Interleukin-12 subunit beta (IL12B).